A 565-amino-acid polypeptide reads, in one-letter code: Periplasmic trehalase (565 aa).

Positions 1–30 are cleaved as a signal peptide; that stretch reads MKSPTPSRPQKMALIPACIFLCFAALSVQA. Substrate contacts are provided by residues arginine 152, 159 to 160, asparagine 196, 205 to 207, 277 to 279, and glycine 310; these read WD, RSQ, and RPE. Residues aspartate 312 and glutamate 496 each act as proton donor/acceptor in the active site. Glutamate 511 lines the substrate pocket. The segment at 539-565 is disordered; that stretch reads CDNVPATRPLSESTTQPLKQKEAEPTP.

The protein belongs to the glycosyl hydrolase 37 family. In terms of assembly, monomer.

It is found in the periplasm. The catalysed reaction is alpha,alpha-trehalose + H2O = alpha-D-glucose + beta-D-glucose. In terms of biological role, provides the cells with the ability to utilize trehalose at high osmolarity by splitting it into glucose molecules that can subsequently be taken up by the phosphotransferase-mediated uptake system. The protein is Periplasmic trehalase of Escherichia coli O7:K1 (strain IAI39 / ExPEC).